We begin with the raw amino-acid sequence, 239 residues long: MMSCLVPTRFTLTLNTACLLTSTWGFVRATSVVLPPSLSKAGHKQFLTIISIIATIINNAVNISNYYIQRNNKMNLETKKKSDFISRHVTLPVSLVLESIVATVYWPLRLFFVNLIMHGVESTAKTPFPMTVDMAIHLYPILYLLADHYLSGSGTKFKLSNKHAWLIVTSLAFSYFQYLAFLIDAGQGQAYPYPFLDVNEPYKSIIFVVVATITWAYYVFYQKFPPKYIKKSAKKGDKN.

Residues Met1 to Thr11 lie on the Cytoplasmic side of the membrane. Residues Leu12–Ser31 traverse the membrane as a helical segment. The Lumenal portion of the chain corresponds to Val32–Gln45. A helical transmembrane segment spans residues Phe46–Tyr66. The Cytoplasmic segment spans residues Tyr67 to Ser99. Residues Ile100–Val120 form a helical membrane-spanning segment. The Lumenal portion of the chain corresponds to Glu121–Lys125. The chain crosses the membrane as a helical span at residues Thr126 to Ala146. Over Asp147–Lys162 the chain is Cytoplasmic. The helical transmembrane segment at His163–Ile183 threads the bilayer. Over Asp184–Ser204 the chain is Lumenal. A helical membrane pass occupies residues Ile205–Pro225. Topologically, residues Pro226 to Asn239 are cytoplasmic.

Belongs to the UPF0641 family.

The protein localises to the endoplasmic reticulum membrane. This chain is UPF0641 membrane protein YHR140W, found in Saccharomyces cerevisiae (strain ATCC 204508 / S288c) (Baker's yeast).